The sequence spans 551 residues: Preprotein translocase subunit SCY1, chloroplastic (551 aa).

Residues 1 to 67 (MITVSEVSSY…WNLGLVINSR (67 aa)) constitute a chloroplast transit peptide. The next 10 membrane-spanning stretches (helical) occupy residues 142-162 (FLKL…PLGG), 192-212 (LGIC…FQLL), 241-261 (ASVG…RPYV), 268-288 (WVVS…YIGE), 295-315 (LGNG…PASF), 328-348 (YTGL…IVYV), 382-402 (SAGV…ATLA), 415-435 (FALT…IAFF), 482-502 (VLGS…EQIT), and 503-523 (HLTA…GCAT).

It belongs to the SecY/SEC61-alpha family. Part of the Sec protein translocation apparatus. Interacts with SECE1, ALB3 and probably with SECA1.

It is found in the plastid. It localises to the chloroplast thylakoid membrane. Involved in protein export. Probably interacts with other proteins to allow the translocation of proteins across the chloroplast thylakoid membranes. Required for normal greening during embryogenesis. Central subunit of the protein translocation channel SecYE. Consists of two halves formed by TMs 1-5 and 6-10. These two domains form a lateral gate at the front which open onto the bilayer between TMs 2 and 7, and are clamped together by SecE at the back. The channel is closed by both a pore ring composed of hydrophobic SecY resides and a short helix (helix 2A) on the extracellular side of the membrane which forms a plug. This is Preprotein translocase subunit SCY1, chloroplastic (SCY1) from Arabidopsis thaliana (Mouse-ear cress).